We begin with the raw amino-acid sequence, 283 residues long: Pantothenate synthetase (283 aa).

Met-34–His-41 serves as a coordination point for ATP. The Proton donor role is filled by His-41. Gln-65 is a (R)-pantoate binding site. Position 65 (Gln-65) interacts with beta-alanine. Gly-152–Asp-155 is an ATP binding site. Gln-158 contributes to the (R)-pantoate binding site. Residues Val-181 and Met-189–Arg-192 each bind ATP.

The protein belongs to the pantothenate synthetase family. Homodimer.

The protein resides in the cytoplasm. The catalysed reaction is (R)-pantoate + beta-alanine + ATP = (R)-pantothenate + AMP + diphosphate + H(+). The protein operates within cofactor biosynthesis; (R)-pantothenate biosynthesis; (R)-pantothenate from (R)-pantoate and beta-alanine: step 1/1. In terms of biological role, catalyzes the condensation of pantoate with beta-alanine in an ATP-dependent reaction via a pantoyl-adenylate intermediate. The polypeptide is Pantothenate synthetase (Nitrobacter winogradskyi (strain ATCC 25391 / DSM 10237 / CIP 104748 / NCIMB 11846 / Nb-255)).